Reading from the N-terminus, the 371-residue chain is Queuine tRNA-ribosyltransferase (371 aa).

D90 (proton acceptor) is an active-site residue. Substrate is bound by residues 90-94 (DSGGF), D144, Q185, and G212. The RNA binding stretch occupies residues 243–249 (GVGTPED). The Nucleophile role is filled by D262. The RNA binding; important for wobble base 34 recognition stretch occupies residues 267–271 (TRNAR). Zn(2+)-binding residues include C300, C302, C305, and H331.

Belongs to the queuine tRNA-ribosyltransferase family. Homodimer. Within each dimer, one monomer is responsible for RNA recognition and catalysis, while the other monomer binds to the replacement base PreQ1. Requires Zn(2+) as cofactor.

The catalysed reaction is 7-aminomethyl-7-carbaguanine + guanosine(34) in tRNA = 7-aminomethyl-7-carbaguanosine(34) in tRNA + guanine. Its pathway is tRNA modification; tRNA-queuosine biosynthesis. Functionally, catalyzes the base-exchange of a guanine (G) residue with the queuine precursor 7-aminomethyl-7-deazaguanine (PreQ1) at position 34 (anticodon wobble position) in tRNAs with GU(N) anticodons (tRNA-Asp, -Asn, -His and -Tyr). Catalysis occurs through a double-displacement mechanism. The nucleophile active site attacks the C1' of nucleotide 34 to detach the guanine base from the RNA, forming a covalent enzyme-RNA intermediate. The proton acceptor active site deprotonates the incoming PreQ1, allowing a nucleophilic attack on the C1' of the ribose to form the product. After dissociation, two additional enzymatic reactions on the tRNA convert PreQ1 to queuine (Q), resulting in the hypermodified nucleoside queuosine (7-(((4,5-cis-dihydroxy-2-cyclopenten-1-yl)amino)methyl)-7-deazaguanosine). The chain is Queuine tRNA-ribosyltransferase from Acidithiobacillus ferrooxidans (strain ATCC 23270 / DSM 14882 / CIP 104768 / NCIMB 8455) (Ferrobacillus ferrooxidans (strain ATCC 23270)).